The chain runs to 155 residues: MRKNRAPKREVLADPMYNSIVVTRLINRVMLDGKRGVAAQIVYGAFKQIEEATGNNPLEVFETAMENIMPVLEVRARRVGGSNYQVPVEVRPERRTTLGLRWLVTIARNRGEHTMQDRLAKEILDAANNTGAAVKKREDTHKMAEANRAFAHFRW.

Belongs to the universal ribosomal protein uS7 family. As to quaternary structure, part of the 30S ribosomal subunit. Contacts proteins S9 and S11.

In terms of biological role, one of the primary rRNA binding proteins, it binds directly to 16S rRNA where it nucleates assembly of the head domain of the 30S subunit. Is located at the subunit interface close to the decoding center, probably blocks exit of the E-site tRNA. This Lactococcus lactis subsp. lactis (strain IL1403) (Streptococcus lactis) protein is Small ribosomal subunit protein uS7.